A 339-amino-acid chain; its full sequence is Ketol-acid reductoisomerase (NADP(+)) (339 aa).

Positions 1-182 (MRVYYDRDAD…GGGRAGIIET (182 aa)) constitute a KARI N-terminal Rossmann domain. NADP(+)-binding positions include 24 to 27 (YGSQ), Arg48, Ser51, Thr53, and 83 to 86 (DELQ). The active site involves His108. NADP(+) is bound at residue Gly134. One can recognise a KARI C-terminal knotted domain in the interval 183 to 328 (TFKEECETDL…AKLRGMMPWI (146 aa)). The Mg(2+) site is built by Asp191, Glu195, Glu227, and Glu231. A substrate-binding site is contributed by Ser252.

This sequence belongs to the ketol-acid reductoisomerase family. It depends on Mg(2+) as a cofactor.

It catalyses the reaction (2R)-2,3-dihydroxy-3-methylbutanoate + NADP(+) = (2S)-2-acetolactate + NADPH + H(+). The enzyme catalyses (2R,3R)-2,3-dihydroxy-3-methylpentanoate + NADP(+) = (S)-2-ethyl-2-hydroxy-3-oxobutanoate + NADPH + H(+). It participates in amino-acid biosynthesis; L-isoleucine biosynthesis; L-isoleucine from 2-oxobutanoate: step 2/4. Its pathway is amino-acid biosynthesis; L-valine biosynthesis; L-valine from pyruvate: step 2/4. Its function is as follows. Involved in the biosynthesis of branched-chain amino acids (BCAA). Catalyzes an alkyl-migration followed by a ketol-acid reduction of (S)-2-acetolactate (S2AL) to yield (R)-2,3-dihydroxy-isovalerate. In the isomerase reaction, S2AL is rearranged via a Mg-dependent methyl migration to produce 3-hydroxy-3-methyl-2-ketobutyrate (HMKB). In the reductase reaction, this 2-ketoacid undergoes a metal-dependent reduction by NADPH to yield (R)-2,3-dihydroxy-isovalerate. In Methylorubrum populi (strain ATCC BAA-705 / NCIMB 13946 / BJ001) (Methylobacterium populi), this protein is Ketol-acid reductoisomerase (NADP(+)).